The following is a 435-amino-acid chain: Galactose/lactose metabolism regulatory protein GAL80 (435 aa).

At methionine 1 the chain carries N-acetylmethionine.

It to K.lactis GAL80. In terms of assembly, monomer.

Functionally, this protein is a negative regulator for the gene expression of the lactose/galactose metabolic genes. It binds to GAL4 and so blocks transcriptional activation by it, in the absence of an inducing sugar. The polypeptide is Galactose/lactose metabolism regulatory protein GAL80 (GAL80) (Saccharomyces cerevisiae (strain ATCC 204508 / S288c) (Baker's yeast)).